The sequence spans 484 residues: Phosphomevalonate kinase erg8 (484 aa).

Residues 54-77 (REAASGSAHGRSDTPQAEGNVHGD) form a disordered region. An ATP-binding site is contributed by 184–194 (AHKTGLGSSAA).

Belongs to the GHMP kinase family. Mevalonate kinase subfamily.

It carries out the reaction (R)-5-phosphomevalonate + ATP = (R)-5-diphosphomevalonate + ADP. It participates in isoprenoid biosynthesis; isopentenyl diphosphate biosynthesis via mevalonate pathway; isopentenyl diphosphate from (R)-mevalonate: step 2/3. Functionally, phosphomevalonate kinase; part of the second module of ergosterol biosynthesis pathway that includes the middle steps of the pathway. Erg8 converts 5-phosphomevalonate to 5-diphosphomevalonate. The second module is carried out in the vacuole and involves the formation of farnesyl diphosphate, which is also an important intermediate in the biosynthesis of ubiquinone, dolichol, heme and prenylated proteins. Activity by the mevalonate kinase erg12 (AFUA_4G07780) first converts mevalonate into 5-phosphomevalonate. 5-phosphomevalonate is then further converted to 5-diphosphomevalonate by the phosphomevalonate kinase erg8 (AFUA_5G10680). The diphosphomevalonate decarboxylase mvd1 (AFUA_4G07130) then produces isopentenyl diphosphate. The isopentenyl-diphosphate delta-isomerase idi1 (AFUA_6G11160) then catalyzes the 1,3-allylic rearrangement of the homoallylic substrate isopentenyl (IPP) to its highly electrophilic allylic isomer, dimethylallyl diphosphate (DMAPP). Finally the farnesyl diphosphate synthase erg20 (AFUA_5G02450) catalyzes the sequential condensation of isopentenyl pyrophosphate with dimethylallyl pyrophosphate, and then with the resultant geranylpyrophosphate to the ultimate product farnesyl pyrophosphate. The sequence is that of Phosphomevalonate kinase erg8 from Aspergillus fumigatus (strain ATCC MYA-4609 / CBS 101355 / FGSC A1100 / Af293) (Neosartorya fumigata).